Consider the following 142-residue polypeptide: MISTARVPADKPVRIAFSLNDAPDDTPSEDAIPLVFPELEQQLQPLPPCHDSVESMQVFKQHCQIAEEYHEVKKEIALLEERKKELIAKLDQAEKEKLDAAQLVQEFEALTEENRTLKMAQSQCVEQLENLRIQYQKRQGSS.

In terms of tissue distribution, ubiquitous.

In Mus musculus (Mouse), this protein is MAP3K7 C-terminal-like protein (Map3k7cl).